A 182-amino-acid polypeptide reads, in one-letter code: Large ribosomal subunit protein uL6 (182 aa).

It belongs to the universal ribosomal protein uL6 family. As to quaternary structure, part of the 50S ribosomal subunit.

Its function is as follows. This protein binds to the 23S rRNA, and is important in its secondary structure. It is located near the subunit interface in the base of the L7/L12 stalk, and near the tRNA binding site of the peptidyltransferase center. The chain is Large ribosomal subunit protein uL6 from Dehalococcoides mccartyi (strain ATCC BAA-2100 / JCM 16839 / KCTC 5957 / BAV1).